The primary structure comprises 346 residues: tRNA-specific 2-thiouridylase MnmA (346 aa).

ATP is bound at residue 6–13; it reads AMSGGTDS. The active-site Nucleophile is the Cys-90. An intrachain disulfide couples Cys-90 to Cys-187. Gly-114 lines the ATP pocket. The segment at 137–139 is interaction with tRNA; the sequence is KDQ. The active-site Cysteine persulfide intermediate is Cys-187. Positions 292–293 are interaction with tRNA; it reads RY.

The protein belongs to the MnmA/TRMU family.

The protein resides in the cytoplasm. It catalyses the reaction S-sulfanyl-L-cysteinyl-[protein] + uridine(34) in tRNA + AH2 + ATP = 2-thiouridine(34) in tRNA + L-cysteinyl-[protein] + A + AMP + diphosphate + H(+). In terms of biological role, catalyzes the 2-thiolation of uridine at the wobble position (U34) of tRNA, leading to the formation of s(2)U34. The polypeptide is tRNA-specific 2-thiouridylase MnmA (Nitratidesulfovibrio vulgaris (strain ATCC 29579 / DSM 644 / CCUG 34227 / NCIMB 8303 / VKM B-1760 / Hildenborough) (Desulfovibrio vulgaris)).